A 2462-amino-acid chain; its full sequence is Piezo-type mechanosensitive ion channel homolog (2462 aa).

The next 19 membrane-spanning stretches (helical) occupy residues 5–25 (LVGF…WSVI), 27–47 (FLDL…GYRF), 57–77 (IFIF…IWAA), 105–125 (TVMY…ADIY), 163–183 (AVQL…FFIG), 207–227 (LYIY…PINF), 248–268 (EGPD…LSYV), 325–345 (FFTY…FHFA), 347–367 (LCAF…PSLF), 374–394 (GLLL…NVAF), 404–424 (FGLG…FLYL), 467–487 (LIFL…IFFL), 502–522 (SLIL…IDLV), 554–574 (IALL…LFSF), 653–673 (VYLV…LLWI), 694–714 (AVLV…QLWL), 730–750 (APLL…QLYS), 792–812 (FYAS…GLVI), and 826–846 (SFLI…LWGM). The segment at 927–947 (ASVSSSNGENPSSTDHASISM) is disordered. Low complexity predominate over residues 928–939 (SVSSSNGENPSS). 8 helical membrane-spanning segments follow: residues 1027 to 1047 (FWIE…ALLL), 1050 to 1070 (FALL…CVLL), 1078 to 1098 (LWPV…VATW), 1143 to 1160 (TLIS…KLRA), 1204 to 1224 (LYCY…TGTL), 1228 to 1248 (ILHL…LEIL), 1260 to 1280 (VYNF…VGNF), and 1310 to 1330 (SALV…MFSS). Residues 1347-1400 (AIVREQEKKAARKTEQLQQIREAEEKKRQRNLQVEKMKSEMLNLRVQLHRMNSD) adopt a coiled-coil conformation. Residues 1543–1583 (SDTNEQSSVDDEVYDEMESQKRKHTPFERSTSLQSDRSSDG) form a disordered region. A compositionally biased stretch (acidic residues) spans 1550–1559 (SVDDEVYDEM). Residues 1570-1583 (ERSTSLQSDRSSDG) show a composition bias toward polar residues. The next 8 membrane-spanning stretches (helical) occupy residues 1611 to 1631 (FIIA…AALF), 1647 to 1667 (VIML…QIII), 1916 to 1936 (YIFG…QSVI), 1956 to 1976 (FVII…IYLC), 1984 to 2004 (VYYL…AWSI), 2012 to 2032 (AGLA…LQAI), 2130 to 2150 (GICL…MYSS), and 2369 to 2389 (FLGD…FVLA).

This sequence belongs to the PIEZO (TC 1.A.75) family.

The protein resides in the membrane. In terms of biological role, pore-forming subunit of a mechanosensitive non-specific cation channel, that conducts both sodium and potassium ions. The chain is Piezo-type mechanosensitive ion channel homolog from Arabidopsis thaliana (Mouse-ear cress).